We begin with the raw amino-acid sequence, 450 residues long: UDP-N-acetylmuramoylalanine--D-glutamate ligase (450 aa).

119–125 (GSNGKTT) contacts ATP.

It belongs to the MurCDEF family.

It localises to the cytoplasm. The catalysed reaction is UDP-N-acetyl-alpha-D-muramoyl-L-alanine + D-glutamate + ATP = UDP-N-acetyl-alpha-D-muramoyl-L-alanyl-D-glutamate + ADP + phosphate + H(+). The protein operates within cell wall biogenesis; peptidoglycan biosynthesis. Cell wall formation. Catalyzes the addition of glutamate to the nucleotide precursor UDP-N-acetylmuramoyl-L-alanine (UMA). The chain is UDP-N-acetylmuramoylalanine--D-glutamate ligase from Bacillus cereus (strain B4264).